The chain runs to 472 residues: WAS protein family homolog DDB_G0292878 (472 aa).

Positions 279 to 472 are disordered; it reads LPTYDNSNSG…ESDTDSSEWE (194 aa). The span at 282 to 299 shows a compositional bias: polar residues; that stretch reads YDNSNSGSAPVNQSSGGD. Positions 300-314 are enriched in low complexity; that stretch reads NNVNNNNNNNNSNNS. Pro residues predominate over residues 320-356; that stretch reads PPQPTNAPPPPPPPPQSANAPPPPPPPPVSAPPPFNP. Acidic residues predominate over residues 363-373; it reads NDDDDDDDDDN. A compositionally biased stretch (gly residues) spans 374–383; that stretch reads GGGGGPGGAI. The region spanning 382 to 401 is the WH2 domain; it reads AIGDLLADIRRGHKNRLKKA. Over residues 457 to 472 the composition is skewed to acidic residues; the sequence is TDDQDGESDTDSSEWE.

The protein belongs to the WASH1 family.

Its function is as follows. Acts as a nucleation-promoting factor by activating the Arp2/3 complex to induce actin polymerization. This chain is WAS protein family homolog DDB_G0292878, found in Dictyostelium discoideum (Social amoeba).